Consider the following 890-residue polypeptide: Kinesin-like protein KIN-7C, mitochondrial (890 aa).

A compositionally biased stretch (polar residues) spans 1–13 (MSATRSQRSSTIS). A disordered region spans residues 1-66 (MSATRSQRSS…TSSAAASSTA (66 aa)). The transit peptide at 1 to 73 (MSATRSQRSS…STAVASTKLK (73 aa)) directs the protein to the mitochondrion. Over residues 40–66 (SPVTSSSPLLRSSPSPSTSSAAASSTA) the composition is skewed to low complexity. Residues 75–394 (NITVTIRFRP…LKFAQRCKHV (320 aa)) enclose the Kinesin motor domain. 155-162 (GVTSSGKT) is a binding site for ATP. The stretch at 395-468 (EIKASRNKIM…MGRIQRLTKL (74 aa)) forms a coiled coil. The disordered stretch occupies residues 511–595 (DGAVSTVSEH…TTRRENAAAI (85 aa)). Over residues 569-579 (SQASGSPSSSS) the composition is skewed to low complexity. Coiled coils occupy residues 664–693 (HIRDQIQKLEDEISEKKDQIRVLEQQIIEI) and 729–765 (ADNRILQEQLQMTKSENAEMQETIILLRQQLDSLAER). A disordered region spans residues 768-797 (TQQIAGDESSGKNIHNRNGEESEIYSGAGT). A coiled-coil region spans residues 818–884 (NETALNSQAL…AEEVTRLCNE (67 aa)).

Belongs to the TRAFAC class myosin-kinesin ATPase superfamily. Kinesin family. KIN-7 subfamily.

Its subcellular location is the mitochondrion. This is Kinesin-like protein KIN-7C, mitochondrial from Arabidopsis thaliana (Mouse-ear cress).